A 185-amino-acid polypeptide reads, in one-letter code: Protein GrpE (185 aa).

The interval 1 to 37 (MEEQEEKQYNQNIQDNEEGTQMREELQESTSAQQTLQ) is disordered. Residues 28 to 37 (ESTSAQQTLQ) show a composition bias toward polar residues.

It belongs to the GrpE family. In terms of assembly, homodimer.

Its subcellular location is the cytoplasm. Functionally, participates actively in the response to hyperosmotic and heat shock by preventing the aggregation of stress-denatured proteins, in association with DnaK and GrpE. It is the nucleotide exchange factor for DnaK and may function as a thermosensor. Unfolded proteins bind initially to DnaJ; upon interaction with the DnaJ-bound protein, DnaK hydrolyzes its bound ATP, resulting in the formation of a stable complex. GrpE releases ADP from DnaK; ATP binding to DnaK triggers the release of the substrate protein, thus completing the reaction cycle. Several rounds of ATP-dependent interactions between DnaJ, DnaK and GrpE are required for fully efficient folding. This chain is Protein GrpE, found in Helicobacter hepaticus (strain ATCC 51449 / 3B1).